The primary structure comprises 377 residues: Spermidine/putrescine import ATP-binding protein PotA (377 aa).

The 231-residue stretch at 18-248 (IRLSGISKSF…PKNLFVARFI (231 aa)) folds into the ABC transporter domain. 50–57 (GPSGCGKT) is an ATP binding site.

Belongs to the ABC transporter superfamily. Spermidine/putrescine importer (TC 3.A.1.11.1) family. In terms of assembly, the complex is composed of two ATP-binding proteins (PotA), two transmembrane proteins (PotB and PotC) and a solute-binding protein (PotD).

Its subcellular location is the cell inner membrane. The catalysed reaction is ATP + H2O + polyamine-[polyamine-binding protein]Side 1 = ADP + phosphate + polyamineSide 2 + [polyamine-binding protein]Side 1.. Its function is as follows. Part of the ABC transporter complex PotABCD involved in spermidine/putrescine import. Responsible for energy coupling to the transport system. The chain is Spermidine/putrescine import ATP-binding protein PotA from Vibrio vulnificus (strain CMCP6).